The following is a 247-amino-acid chain: 5'-nucleotidase SurE (247 aa).

4 residues coordinate a divalent metal cation: aspartate 8, aspartate 9, serine 39, and asparagine 91.

This sequence belongs to the SurE nucleotidase family. A divalent metal cation is required as a cofactor.

Its subcellular location is the cytoplasm. The enzyme catalyses a ribonucleoside 5'-phosphate + H2O = a ribonucleoside + phosphate. In terms of biological role, nucleotidase that shows phosphatase activity on nucleoside 5'-monophosphates. In Pelobacter propionicus (strain DSM 2379 / NBRC 103807 / OttBd1), this protein is 5'-nucleotidase SurE.